Here is a 171-residue protein sequence, read N- to C-terminus: Translationally-controlled tumor protein homolog (171 aa).

One can recognise a TCTP domain in the interval M1–F171.

It belongs to the TCTP family.

It localises to the cytoplasm. Functionally, involved in calcium binding and microtubule stabilization. This chain is Translationally-controlled tumor protein homolog, found in Anopheles gambiae (African malaria mosquito).